The following is a 683-amino-acid chain: MTDALLPANLNAKRLSEQNYFRKGKSIAQTGRSKLQNQRAILNQQILKAMRMRAGAENLLRATANNKIREQVLLELSFVNSNLQRLKEELERLNISVEVYQHTEQASNIPLIPLGLKETKDVDFTTAFKDFILEHYSEDASEYENELADLMDLRQACRTPSRDEAGVELLVSYFQQLGYLENRFFPPSRNIGILFTWYDSFTGVPVSQPNISLEKASILFNIAALYSQIGTRCNRQTKIGLEEAVTTFQKAAGVLNYLKETFTHTPSYDMSPAMLGALIKMLLAEAHECYFEKMILSGIQNEFCTLLKAAQEAAKVSEVHMQVYTLMNQAPIKENVPYSWSVMVQVKAEHYKALANYFVAITLIDYQLNLSDDEDKQEKAISQLYDSMPEGLTAQTILKDQQQRTLLGKAHLSKAIRSHEEAIRFSTLCSTLRQIDVLQLILSAFHQRSLLKFSQHQKPDDFLDLLSAPDIVSKTEYQAETIPPQLSKDKVTDIFQRLGPLSIFSVKQRWSAPRKMCITKEDGDFGFVLKGDCPVQVISLDPLCPAATEGLKEGDYIVSVAGKDCKWCSTSQVMDMLQETGQDSIEIQVISIQDQTNSLANKSATYYAGMQKTYSLVCLTMDNDKNTKTQKATKKLSFLSWGFKNRQKAASTICLPSEVKGKPKTDMVFSFPDNSLSTESALY.

An REM-1 domain is found at 25–99; it reads KSIAQTGRSK…LERLNISVEV (75 aa). Residues 110 to 501 enclose the BRO1 domain; that stretch reads PLIPLGLKET…TDIFQRLGPL (392 aa). Residues 515 to 592 form the PDZ domain; the sequence is KMCITKEDGD…DSIEIQVISI (78 aa).

This sequence belongs to the RHPN family. Interacts with RhoA.

It localises to the cytoplasm. Its subcellular location is the perinuclear region. Binds specifically to GTP-Rho. This Xenopus laevis (African clawed frog) protein is Rhophilin-2-B (rhpn2-b).